The primary structure comprises 232 residues: Ubiquinone biosynthesis O-methyltransferase (232 aa).

S-adenosyl-L-methionine is bound by residues R36, G55, D76, and L120.

The protein belongs to the methyltransferase superfamily. UbiG/COQ3 family.

It carries out the reaction a 3-demethylubiquinol + S-adenosyl-L-methionine = a ubiquinol + S-adenosyl-L-homocysteine + H(+). It catalyses the reaction a 3-(all-trans-polyprenyl)benzene-1,2-diol + S-adenosyl-L-methionine = a 2-methoxy-6-(all-trans-polyprenyl)phenol + S-adenosyl-L-homocysteine + H(+). It participates in cofactor biosynthesis; ubiquinone biosynthesis. In terms of biological role, O-methyltransferase that catalyzes the 2 O-methylation steps in the ubiquinone biosynthetic pathway. The sequence is that of Ubiquinone biosynthesis O-methyltransferase from Pseudomonas syringae pv. tomato (strain ATCC BAA-871 / DC3000).